The primary structure comprises 441 residues: Double-stranded RNA-binding protein 1 (441 aa).

DRBM domains lie at 1–71 (MYKS…HLSS), 86–155 (SYKS…SLPQ), and 169–237 (SYKN…HFED). The interval 69–88 (LSSLPLPPPPPPSENQSSYK) is disordered.

In terms of biological role, binds double-stranded RNA. In Oryza sativa subsp. japonica (Rice), this protein is Double-stranded RNA-binding protein 1 (DRB1).